The primary structure comprises 143 residues: Large ribosomal subunit protein uL15 (143 aa).

The segment at 1-48 (MRLNTISPSKGAKHSSKRLGRGIGSGLGKTSGRGHKGQKARSGCSIHR) is disordered. The span at 11–20 (GAKHSSKRLG) shows a compositional bias: basic residues. Residues 21-31 (RGIGSGLGKTS) are compositionally biased toward gly residues.

This sequence belongs to the universal ribosomal protein uL15 family. In terms of assembly, part of the 50S ribosomal subunit.

Binds to the 23S rRNA. The sequence is that of Large ribosomal subunit protein uL15 from Baumannia cicadellinicola subsp. Homalodisca coagulata.